The chain runs to 124 residues: Large ribosomal subunit protein bL12 (124 aa).

The protein belongs to the bacterial ribosomal protein bL12 family. As to quaternary structure, homodimer. Part of the ribosomal stalk of the 50S ribosomal subunit. Forms a multimeric L10(L12)X complex, where L10 forms an elongated spine to which 2 to 4 L12 dimers bind in a sequential fashion. Binds GTP-bound translation factors.

Forms part of the ribosomal stalk which helps the ribosome interact with GTP-bound translation factors. Is thus essential for accurate translation. The sequence is that of Large ribosomal subunit protein bL12 from Rickettsia akari (strain Hartford).